Reading from the N-terminus, the 141-residue chain is Putative lipoprotein Tanf_09445 (141 aa).

A signal peptide spans 1 to 20; sequence MKQKIILWIGALLLLTAGTG. Cys-21 carries N-palmitoyl cysteine lipidation. A lipid anchor (S-diacylglycerol cysteine) is attached at Cys-21.

It localises to the cell membrane. The protein is Putative lipoprotein Tanf_09445 of Tannerella forsythia (strain ATCC 43037 / JCM 10827 / CCUG 21028 A / KCTC 5666 / FDC 338) (Bacteroides forsythus).